Here is a 750-residue protein sequence, read N- to C-terminus: Photosystem I P700 chlorophyll a apoprotein A1 (750 aa).

Transmembrane regions (helical) follow at residues 70-93, 156-179, 195-219, 291-309, 346-369, 385-411, 433-455, and 531-549; these read VFSAHFGQLSIIFLWLSGMYFHGA, LYCTAIGALVFAALMLFAGWFHYH, LNHHLAGLLGLGSLSWAGHQVHVSL, IAHHHLAIAILFLIAGHMY, WHAQLSLNLAMLGSLTIVVAHHMY, LSLFTHHMWIGGFLIVGAAAHAAIFMV, AIISHLNWACIFLGFHSFGLYIH, and FLVHHIHAFTIHVTVLILL. Cys-573 and Cys-582 together coordinate [4Fe-4S] cluster. The next 2 helical transmembrane spans lie at 589-610 and 664-686; these read HVFLGLFWMYNSISVVIFHFSW and LSAYGLFFLGAHFVWAFSLMFLF. His-675 contacts chlorophyll a'. Chlorophyll a is bound by residues Met-683 and Tyr-691. Phylloquinone is bound at residue Trp-692. The chain crosses the membrane as a helical span at residues 724 to 744; the sequence is AVGVTHYLLGGIATTWAFFLA.

It belongs to the PsaA/PsaB family. In terms of assembly, the PsaA/B heterodimer binds the P700 chlorophyll special pair and subsequent electron acceptors. PSI consists of a core antenna complex that captures photons, and an electron transfer chain that converts photonic excitation into a charge separation. The eukaryotic PSI reaction center is composed of at least 11 subunits. Requires P700 is a chlorophyll a/chlorophyll a' dimer, A0 is one or more chlorophyll a, A1 is one or both phylloquinones and FX is a shared 4Fe-4S iron-sulfur center. as cofactor.

It localises to the plastid. It is found in the chloroplast thylakoid membrane. The catalysed reaction is reduced [plastocyanin] + hnu + oxidized [2Fe-2S]-[ferredoxin] = oxidized [plastocyanin] + reduced [2Fe-2S]-[ferredoxin]. Its function is as follows. PsaA and PsaB bind P700, the primary electron donor of photosystem I (PSI), as well as the electron acceptors A0, A1 and FX. PSI is a plastocyanin-ferredoxin oxidoreductase, converting photonic excitation into a charge separation, which transfers an electron from the donor P700 chlorophyll pair to the spectroscopically characterized acceptors A0, A1, FX, FA and FB in turn. Oxidized P700 is reduced on the lumenal side of the thylakoid membrane by plastocyanin. This Solanum bulbocastanum (Wild potato) protein is Photosystem I P700 chlorophyll a apoprotein A1.